We begin with the raw amino-acid sequence, 306 residues long: Transcription factor MYBS1 (306 aa).

The region spanning 18 to 73 (WTREDDKAFENALAACAAPPPADGGAPDDDWFAALAASVPGARSAEEVRRHYEALV) is the Myb-like domain. The short motif at 72 to 86 (LVEDVAAIDAGRVPL) is the Nuclear export signal 1 element. The segment at 89–142 (YAGEESAAPPDGAGAAAAASKDGGHRRDERKGGGGGYDGGKSCSKAEQERRKGI) is disordered. Low complexity predominate over residues 92–109 (EESAAPPDGAGAAAAASK). 2 stretches are compositionally biased toward basic and acidic residues: residues 110 to 120 (DGGHRRDERKG) and 132 to 142 (SKAEQERRKGI). The Nuclear localization signal 1 motif lies at 133–140 (KAEQERRK). Residues 136–192 (QERRKGIPWTEEEHRLFLLGLDKFGKGDWRSISRNFVISRTPTQVASHAQKYFIRLN) enclose the HTH myb-type domain. Residues 164–188 (WRSISRNFVISRTPTQVASHAQKYF) constitute a DNA-binding region (H-T-H motif). The Nuclear localization signal 2 motif lies at 196–200 (RDRRR). The short motif at 203 to 215 (IHDITSVTAGDQV) is the Nuclear export signal 2 element. The span at 228–241 (ATGNPAAAALGPPG) shows a compositional bias: low complexity. Positions 228–255 (ATGNPAAAALGPPGMKHHHHHHPGGAPP) are disordered.

Homodimer. Interacts with GAMYB. In terms of tissue distribution, expressed in aboveground tissues, with the highest level in leaves.

It localises to the nucleus. The protein localises to the cytoplasm. Functionally, transcription activator that binds to 5'-TATCCA-3' elements in gene promoters. Derepresses strongly the sugar-repressed transcription of promoters containing SRS or 5'-TATCCA-3' elements. Functions with GAMYB to integrate diverse nutrient starvation and gibberellin (GA) signaling pathways during germination of grains. Sugar, nitrogen and phosphate starvation signals converge and interconnect with GA to promote the co-nuclear import of MYBS1 and GAMYB, resulting in the expression of a large set of GA-inducible hydrolases, transporters, and regulators that are essential for mobilization of nutrient reserves in the endosperm to support seedling growth. The protein is Transcription factor MYBS1 of Oryza sativa subsp. japonica (Rice).